We begin with the raw amino-acid sequence, 615 residues long: Dihydroxy-acid dehydratase (615 aa).

Asp81 is a Mg(2+) binding site. [2Fe-2S] cluster is bound at residue Cys122. Residues Asp123 and Lys124 each coordinate Mg(2+). Residue Lys124 is modified to N6-carboxylysine. Cys195 contacts [2Fe-2S] cluster. Glu491 is a Mg(2+) binding site. Ser517 serves as the catalytic Proton acceptor.

Belongs to the IlvD/Edd family. As to quaternary structure, homodimer. Requires [2Fe-2S] cluster as cofactor. It depends on Mg(2+) as a cofactor.

The catalysed reaction is (2R)-2,3-dihydroxy-3-methylbutanoate = 3-methyl-2-oxobutanoate + H2O. It carries out the reaction (2R,3R)-2,3-dihydroxy-3-methylpentanoate = (S)-3-methyl-2-oxopentanoate + H2O. It functions in the pathway amino-acid biosynthesis; L-isoleucine biosynthesis; L-isoleucine from 2-oxobutanoate: step 3/4. The protein operates within amino-acid biosynthesis; L-valine biosynthesis; L-valine from pyruvate: step 3/4. Its function is as follows. Functions in the biosynthesis of branched-chain amino acids. Catalyzes the dehydration of (2R,3R)-2,3-dihydroxy-3-methylpentanoate (2,3-dihydroxy-3-methylvalerate) into 2-oxo-3-methylpentanoate (2-oxo-3-methylvalerate) and of (2R)-2,3-dihydroxy-3-methylbutanoate (2,3-dihydroxyisovalerate) into 2-oxo-3-methylbutanoate (2-oxoisovalerate), the penultimate precursor to L-isoleucine and L-valine, respectively. This Shewanella halifaxensis (strain HAW-EB4) protein is Dihydroxy-acid dehydratase.